Consider the following 642-residue polypeptide: 1-deoxy-D-xylulose-5-phosphate synthase 2 (642 aa).

Thiamine diphosphate contacts are provided by residues His-79 and 120-122 (AHS). Residue Asp-155 coordinates Mg(2+). Thiamine diphosphate-binding positions include 156-157 (GS), Asn-184, Tyr-293, and Glu-375. Mg(2+) is bound at residue Asn-184.

This sequence belongs to the transketolase family. DXPS subfamily. In terms of assembly, homodimer. Mg(2+) serves as cofactor. Thiamine diphosphate is required as a cofactor.

It carries out the reaction D-glyceraldehyde 3-phosphate + pyruvate + H(+) = 1-deoxy-D-xylulose 5-phosphate + CO2. The protein operates within metabolic intermediate biosynthesis; 1-deoxy-D-xylulose 5-phosphate biosynthesis; 1-deoxy-D-xylulose 5-phosphate from D-glyceraldehyde 3-phosphate and pyruvate: step 1/1. Functionally, catalyzes the acyloin condensation reaction between C atoms 2 and 3 of pyruvate and glyceraldehyde 3-phosphate to yield 1-deoxy-D-xylulose-5-phosphate (DXP). This is 1-deoxy-D-xylulose-5-phosphate synthase 2 from Roseobacter denitrificans (strain ATCC 33942 / OCh 114) (Erythrobacter sp. (strain OCh 114)).